Reading from the N-terminus, the 754-residue chain is Leucine-rich repeat-containing protein 36 (754 aa).

2 LRR repeats span residues 51–72 and 73–94; these read NLRS…QYLC and SLQD…SRLQ. The 40-residue stretch at 107–146 folds into the LRRCT domain; that stretch reads NPVVRKDTDYRLFAVYTLQTLEKLDDRTVREGERKAAKLH. Residues 241–255 show a composition bias toward basic and acidic residues; that stretch reads REMPSDNHQEDEFRH. The interval 241–270 is disordered; it reads REMPSDNHQEDEFRHYSPRQSTVRSPEKMT. Residues 600 to 680 are a coiled coil; the sequence is NDMESLKQKL…EKTVAILHES (81 aa). Positions 702-734 are disordered; that stretch reads YSGKALLPPEKGHHLGRSSPFGKSTLSSSSPVA. Positions 722-732 are enriched in polar residues; sequence FGKSTLSSSSP.

This Homo sapiens (Human) protein is Leucine-rich repeat-containing protein 36 (LRRC36).